Consider the following 610-residue polypeptide: UvrABC system protein C (610 aa).

One can recognise a GIY-YIG domain in the interval 13–91 (HLPGVYRMYD…IKENQPKYNV (79 aa)). Positions 201 to 236 (GQVVEHLVQKMENAAQELDFEAAARFRDQIQSVRAV) constitute a UVR domain.

Belongs to the UvrC family. Interacts with UvrB in an incision complex.

It localises to the cytoplasm. The UvrABC repair system catalyzes the recognition and processing of DNA lesions. UvrC both incises the 5' and 3' sides of the lesion. The N-terminal half is responsible for the 3' incision and the C-terminal half is responsible for the 5' incision. The protein is UvrABC system protein C of Actinobacillus pleuropneumoniae serotype 7 (strain AP76).